The chain runs to 150 residues: Large ribosomal subunit protein bL9 (150 aa).

Belongs to the bacterial ribosomal protein bL9 family.

Functionally, binds to the 23S rRNA. The protein is Large ribosomal subunit protein bL9 of Pseudoalteromonas translucida (strain TAC 125).